We begin with the raw amino-acid sequence, 158 residues long: Large ribosomal subunit protein uL15 (158 aa).

Disordered regions lie at residues 1-53 and 138-158; these read MRIH…FEGG and ESAG…SNNE. Residues 23–35 are compositionally biased toward gly residues; it reads ISAGQGASGGFGM. Polar residues predominate over residues 145 to 158; that stretch reads QDLSDTSNAPSNNE.

The protein belongs to the universal ribosomal protein uL15 family. As to quaternary structure, part of the 50S ribosomal subunit.

In terms of biological role, binds to the 23S rRNA. The polypeptide is Large ribosomal subunit protein uL15 (Crocosphaera subtropica (strain ATCC 51142 / BH68) (Cyanothece sp. (strain ATCC 51142))).